The following is a 407-amino-acid chain: COP9 signalosome complex subunit 4 (407 aa).

One can recognise a PCI domain in the interval 204–373; sequence YRRKFIEAAQ…AIVHFENREL (170 aa).

It belongs to the CSN4 family. As to quaternary structure, component of the CSN complex, probably composed of CSN1b, alien/CSN2, CSN3, CSN4, CSN5, CSN6, CSN7 and CSN8. Interacts directly with CSN7.

The protein localises to the cytoplasm. It is found in the nucleus. Functionally, component of the COP9 signalosome complex (CSN), a complex involved in various cellular and developmental processes. The CSN complex is an essential regulator of the ubiquitin (Ubl) conjugation pathway by mediating the deneddylation of the cullin subunits of the SCF-type E3 ligase complexes, leading to decrease the Ubl ligase activity of SCF. The CSN complex plays an essential role in oogenesis and embryogenesis and is required for proper photoreceptor R cell differentiation and promote lamina glial cell migration or axon targeting. It also promotes Ubl-dependent degradation of cyclin E (CycE) during early oogenesis. The polypeptide is COP9 signalosome complex subunit 4 (CSN4) (Drosophila melanogaster (Fruit fly)).